The sequence spans 165 residues: Ribosome maturation factor RimM (165 aa).

In terms of domain architecture, PRC barrel spans 94 to 165; it reads EDEFYIADLN…YGILNYKREV (72 aa).

It belongs to the RimM family. Binds ribosomal protein uS19.

The protein resides in the cytoplasm. Its function is as follows. An accessory protein needed during the final step in the assembly of 30S ribosomal subunit, possibly for assembly of the head region. Essential for efficient processing of 16S rRNA. May be needed both before and after RbfA during the maturation of 16S rRNA. It has affinity for free ribosomal 30S subunits but not for 70S ribosomes. The protein is Ribosome maturation factor RimM of Rickettsia canadensis (strain McKiel).